An 82-amino-acid polypeptide reads, in one-letter code: Phosphoribosylformylglycinamidine synthase subunit PurS (82 aa).

It belongs to the PurS family. Homodimer. Part of the FGAM synthase complex composed of 1 PurL, 1 PurQ and 2 PurS subunits.

The protein localises to the cytoplasm. It catalyses the reaction N(2)-formyl-N(1)-(5-phospho-beta-D-ribosyl)glycinamide + L-glutamine + ATP + H2O = 2-formamido-N(1)-(5-O-phospho-beta-D-ribosyl)acetamidine + L-glutamate + ADP + phosphate + H(+). It participates in purine metabolism; IMP biosynthesis via de novo pathway; 5-amino-1-(5-phospho-D-ribosyl)imidazole from N(2)-formyl-N(1)-(5-phospho-D-ribosyl)glycinamide: step 1/2. Functionally, part of the phosphoribosylformylglycinamidine synthase complex involved in the purines biosynthetic pathway. Catalyzes the ATP-dependent conversion of formylglycinamide ribonucleotide (FGAR) and glutamine to yield formylglycinamidine ribonucleotide (FGAM) and glutamate. The FGAM synthase complex is composed of three subunits. PurQ produces an ammonia molecule by converting glutamine to glutamate. PurL transfers the ammonia molecule to FGAR to form FGAM in an ATP-dependent manner. PurS interacts with PurQ and PurL and is thought to assist in the transfer of the ammonia molecule from PurQ to PurL. This is Phosphoribosylformylglycinamidine synthase subunit PurS from Thermotoga maritima (strain ATCC 43589 / DSM 3109 / JCM 10099 / NBRC 100826 / MSB8).